Consider the following 166-residue polypeptide: Signal peptidase complex catalytic subunit SEC11 (166 aa).

Over 1–9 the chain is Cytoplasmic; the sequence is MNLRQQLTQ. The helical; Signal-anchor for type II membrane protein transmembrane segment at 10-31 threads the bilayer; that stretch reads LLSIAYVFTSAFVAWKALSIVA. Topologically, residues 32–166 are lumenal; the sequence is NSHSPIVVVL…MGLSALLSGE (135 aa). Active-site charge relay system residues include serine 44, histidine 83, and aspartate 108. Residues 152–163 form a C-terminal short (CTS) helix region; sequence ALLGFMGLSALL.

Belongs to the peptidase S26B family. In terms of assembly, component of the signal peptidase complex (SPC) composed of a catalytic subunit SEC11 and three accessory subunits SPC1, SPC2 and SPC3. The complex induces a local thinning of the ER membrane which is used to measure the length of the signal peptide (SP) h-region of protein substrates. This ensures the selectivity of the complex towards h-regions shorter than 18-20 amino acids. SPC associates with the translocon complex.

It is found in the endoplasmic reticulum membrane. The enzyme catalyses Cleavage of hydrophobic, N-terminal signal or leader sequences from secreted and periplasmic proteins.. Catalytic component of the signal peptidase complex (SPC) which catalyzes the cleavage of N-terminal signal sequences from nascent proteins as they are translocated into the lumen of the endoplasmic reticulum. Specifically cleaves N-terminal signal peptides that contain a hydrophobic alpha-helix (h-region) shorter than 18-20 amino acids. In Clavispora lusitaniae (strain ATCC 42720) (Yeast), this protein is Signal peptidase complex catalytic subunit SEC11 (SEC11).